The primary structure comprises 184 residues: Photosystem I assembly protein Ycf4 (184 aa).

The next 2 membrane-spanning stretches (helical) occupy residues phenylalanine 22 to serine 42 and isoleucine 57 to serine 77.

This sequence belongs to the Ycf4 family.

It is found in the plastid. The protein localises to the chloroplast thylakoid membrane. Its function is as follows. Seems to be required for the assembly of the photosystem I complex. This is Photosystem I assembly protein Ycf4 from Lobularia maritima (Sweet alyssum).